Consider the following 379-residue polypeptide: Chaperone protein DnaJ (379 aa).

In terms of domain architecture, J spans 5-71 (DYYEILGVSR…EKRAMYDRFG (67 aa)). Residues 149–231 (GTTIPIEYDR…CGGSGRIRKR (83 aa)) form a CR-type zinc finger. The Zn(2+) site is built by Cys-162, Cys-165, Cys-179, Cys-182, Cys-205, Cys-208, Cys-219, and Cys-222. 4 CXXCXGXG motif repeats span residues 162–169 (CSHCNGEG), 179–186 (CPKCHGTG), 205–212 (CNQCGGTG), and 219–226 (CHVCGGSG).

This sequence belongs to the DnaJ family. Homodimer. Zn(2+) serves as cofactor.

The protein resides in the cytoplasm. Functionally, participates actively in the response to hyperosmotic and heat shock by preventing the aggregation of stress-denatured proteins and by disaggregating proteins, also in an autonomous, DnaK-independent fashion. Unfolded proteins bind initially to DnaJ; upon interaction with the DnaJ-bound protein, DnaK hydrolyzes its bound ATP, resulting in the formation of a stable complex. GrpE releases ADP from DnaK; ATP binding to DnaK triggers the release of the substrate protein, thus completing the reaction cycle. Several rounds of ATP-dependent interactions between DnaJ, DnaK and GrpE are required for fully efficient folding. Also involved, together with DnaK and GrpE, in the DNA replication of plasmids through activation of initiation proteins. The chain is Chaperone protein DnaJ from Thermosipho africanus (strain TCF52B).